A 600-amino-acid polypeptide reads, in one-letter code: Monooxygenase ptmN (600 aa).

Belongs to the FMO family. FAD serves as cofactor.

It participates in secondary metabolite biosynthesis. Its function is as follows. Monooxygenase; part of the gene cluster that mediates the biosynthesis of the indole diterpenes penitrems. The geranylgeranyl diphosphate (GGPP) synthase ptmG catalyzes the first step in penitrem biosynthesis via conversion of farnesyl pyrophosphate and isopentyl pyrophosphate into geranylgeranyl pyrophosphate (GGPP). Condensation of indole-3-glycerol phosphate with GGPP by the prenyl transferase ptmC then forms 3-geranylgeranylindole (3-GGI). Epoxidation by the FAD-dependent monooxygenase ptmM leads to a epoxidized-GGI that is substrate of the terpene cyclase ptmB for cyclization to yield paspaline. Paspaline is subsequently converted to 13-desoxypaxilline by the cytochrome P450 monooxygenase ptmP, the latter being then converted to paxilline by the cytochrome P450 monooxygenase ptmQ. Paxilline is converted to beta-paxitriol via C-10 ketoreduction by the short-chain dehydrogenase ptmH which can be monoprenylated at the C-20 by the indole diterpene prenyltransferase ptmD. A two-step elimination (acetylation and elimination) process performed by the O-acetyltransferase ptmV and ptmI leads to the production of the prenylated form of penijanthine. The FAD-linked oxidoreductase ptmO then converts the prenylated form of penijanthine into PC-M5 which is in turn transformed into PC-M4 by the aromatic dimethylallyltransferase ptmE. Five sequential oxidative transformations performed by the cytochrome P450 monooxygenases ptmK, ptmU, ptmL, ptmN and ptmJ yield the various penitrem compounds. PtmK, ptmU and ptmM are involved in the formation of the key bicyclic ring of penitrem C via the formation of the intermediates secopenitrem D and penitrem D. PtmL catalyzes the epoxidation of penitrem D and C to yield penitrem B and F, respectively. PtmJ catalyzes the last benzylic hydroxylation to convert penitrem B to prenitrem E and penitrem F to penitrem A. This chain is Monooxygenase ptmN, found in Penicillium ochrochloron.